A 258-amino-acid polypeptide reads, in one-letter code: Synaptosomal-associated protein 29 (258 aa).

A disordered region spans residues 1-41 (MSAYPKSYNPFDDDGEDEGARPAPWRDARDLPDGPDAPADR). Over residues 18-32 (EGARPAPWRDARDLP) the composition is skewed to basic and acidic residues. Residues 76–107 (ASSEELARQRGVLERTEKMVDKMDQDLKISQK) are a coiled coil. Residues Ser-77, Ser-78, and Ser-114 each carry the phosphoserine modification. The tract at residues 127–190 (PVETPPEQNG…GSAVSTDAYP (64 aa)) is disordered. Phosphothreonine occurs at positions 130 and 137. The segment covering 132–144 (PEQNGTLASQPNS) has biased composition (polar residues). Ser-163, Ser-182, Ser-185, Ser-204, and Ser-210 each carry phosphoserine. Positions 196–258 (QAYHQKIDSN…KSTERKVRQL (63 aa)) constitute a t-SNARE coiled-coil homology domain.

It belongs to the SNAP-25 family. As to quaternary structure, forms a SNARE complex, composed of VAMP8, SNAP29 and STX17, involved in fusion of autophagosome with lysosome. Interacts with multiple syntaxins including STX6. Interacts with EIPR1. Interacts with STX17; this interaction is increased in the absence of TMEM39A.

The protein resides in the cytoplasm. It is found in the golgi apparatus membrane. It localises to the cytoplasmic vesicle. Its subcellular location is the autophagosome membrane. The protein localises to the cell projection. The protein resides in the cilium membrane. In terms of biological role, SNAREs, soluble N-ethylmaleimide-sensitive factor-attachment protein receptors, are essential proteins for fusion of cellular membranes. SNAREs localized on opposing membranes assemble to form a trans-SNARE complex, an extended, parallel four alpha-helical bundle that drives membrane fusion. SNAP29 is a SNARE involved in autophagy through the direct control of autophagosome membrane fusion with the lysososome membrane. Also plays a role in ciliogenesis by regulating membrane fusions. The polypeptide is Synaptosomal-associated protein 29 (Pongo abelii (Sumatran orangutan)).